A 339-amino-acid polypeptide reads, in one-letter code: MSIARRTTLSKFLIEQQRETNNLPADLRLLIEVVARACKAISYNVSKGALGEALGTAGSENVQGEVQKKLDILSNEILLDANEWGGNLAAMASEEMETFFPIPANYPRGEYLLVFDPLDGSSNIDVNVSIGTIFSVLRCPDGKQATEESFLQPGTEQVAAGYAVYGPQTVFVLTTGNGVNCFTLDREVGSWVLTQSNMQIPADTREYAINASNARHWYEPVQRYVDELNAGKDGPRGDNFNMRWIASMVADVHRILNRGGIFMYPADKRTPDRPGKLRLMYEANPMSFIVEQAGGAATTGTQRIMEVQPTGLHQRVPVFLGSKNEVERVTGYHAEGEGK.

Residues Glu94, Asp116, Leu118, and Asp119 each coordinate Mg(2+). Substrate-binding positions include 119 to 122 (DGSS), Asn210, and Lys276. Glu282 provides a ligand contact to Mg(2+).

Belongs to the FBPase class 1 family. Homotetramer. Mg(2+) serves as cofactor.

It localises to the cytoplasm. The enzyme catalyses beta-D-fructose 1,6-bisphosphate + H2O = beta-D-fructose 6-phosphate + phosphate. It functions in the pathway carbohydrate biosynthesis; gluconeogenesis. The protein is Fructose-1,6-bisphosphatase class 1 of Burkholderia ambifaria (strain ATCC BAA-244 / DSM 16087 / CCUG 44356 / LMG 19182 / AMMD) (Burkholderia cepacia (strain AMMD)).